The chain runs to 330 residues: Aspartate--ammonia ligase (330 aa).

The protein belongs to the class-II aminoacyl-tRNA synthetase family. AsnA subfamily.

The protein localises to the cytoplasm. The catalysed reaction is L-aspartate + NH4(+) + ATP = L-asparagine + AMP + diphosphate + H(+). Its pathway is amino-acid biosynthesis; L-asparagine biosynthesis; L-asparagine from L-aspartate (ammonia route): step 1/1. In Salmonella schwarzengrund (strain CVM19633), this protein is Aspartate--ammonia ligase.